Consider the following 1036-residue polypeptide: Isoleucine--tRNA ligase (1036 aa).

The 'HIGH' region signature appears at Pro-46–His-56. The 'KMSKS' region signature appears at Lys-589 to Arg-593. Lys-592 is an ATP binding site.

The protein belongs to the class-I aminoacyl-tRNA synthetase family. IleS type 2 subfamily. In terms of assembly, monomer. Zn(2+) is required as a cofactor.

It localises to the cytoplasm. It carries out the reaction tRNA(Ile) + L-isoleucine + ATP = L-isoleucyl-tRNA(Ile) + AMP + diphosphate. Its function is as follows. Catalyzes the attachment of isoleucine to tRNA(Ile). As IleRS can inadvertently accommodate and process structurally similar amino acids such as valine, to avoid such errors it has two additional distinct tRNA(Ile)-dependent editing activities. One activity is designated as 'pretransfer' editing and involves the hydrolysis of activated Val-AMP. The other activity is designated 'posttransfer' editing and involves deacylation of mischarged Val-tRNA(Ile). This is Isoleucine--tRNA ligase from Chlamydia trachomatis serovar L2 (strain ATCC VR-902B / DSM 19102 / 434/Bu).